Consider the following 482-residue polypeptide: Glutamyl-tRNA(Gln) amidotransferase subunit A (482 aa).

Catalysis depends on charge relay system residues Lys74 and Ser149. Ser173 serves as the catalytic Acyl-ester intermediate.

Belongs to the amidase family. GatA subfamily. As to quaternary structure, heterotrimer of A, B and C subunits.

The enzyme catalyses L-glutamyl-tRNA(Gln) + L-glutamine + ATP + H2O = L-glutaminyl-tRNA(Gln) + L-glutamate + ADP + phosphate + H(+). Allows the formation of correctly charged Gln-tRNA(Gln) through the transamidation of misacylated Glu-tRNA(Gln) in organisms which lack glutaminyl-tRNA synthetase. The reaction takes place in the presence of glutamine and ATP through an activated gamma-phospho-Glu-tRNA(Gln). The protein is Glutamyl-tRNA(Gln) amidotransferase subunit A of Prochlorococcus marinus (strain AS9601).